The following is a 507-amino-acid chain: Probable cytosol aminopeptidase (507 aa).

Residues K271 and D276 each contribute to the Mn(2+) site. Residue K283 is part of the active site. Mn(2+) contacts are provided by D294, D353, and E355. R357 is an active-site residue.

Belongs to the peptidase M17 family. Mn(2+) serves as cofactor.

The protein localises to the cytoplasm. It catalyses the reaction Release of an N-terminal amino acid, Xaa-|-Yaa-, in which Xaa is preferably Leu, but may be other amino acids including Pro although not Arg or Lys, and Yaa may be Pro. Amino acid amides and methyl esters are also readily hydrolyzed, but rates on arylamides are exceedingly low.. It carries out the reaction Release of an N-terminal amino acid, preferentially leucine, but not glutamic or aspartic acids.. Functionally, presumably involved in the processing and regular turnover of intracellular proteins. Catalyzes the removal of unsubstituted N-terminal amino acids from various peptides. The polypeptide is Probable cytosol aminopeptidase (Nitratidesulfovibrio vulgaris (strain ATCC 29579 / DSM 644 / CCUG 34227 / NCIMB 8303 / VKM B-1760 / Hildenborough) (Desulfovibrio vulgaris)).